Reading from the N-terminus, the 580-residue chain is Arginine--tRNA ligase (580 aa).

Residues 131–141 (ANPTGPLHVGH) carry the 'HIGH' region motif.

It belongs to the class-I aminoacyl-tRNA synthetase family. In terms of assembly, monomer.

Its subcellular location is the cytoplasm. It catalyses the reaction tRNA(Arg) + L-arginine + ATP = L-arginyl-tRNA(Arg) + AMP + diphosphate. This chain is Arginine--tRNA ligase, found in Roseobacter denitrificans (strain ATCC 33942 / OCh 114) (Erythrobacter sp. (strain OCh 114)).